Here is a 178-residue protein sequence, read N- to C-terminus: Large ribosomal subunit protein uL6 (178 aa).

The protein belongs to the universal ribosomal protein uL6 family. As to quaternary structure, part of the 50S ribosomal subunit.

This protein binds to the 23S rRNA, and is important in its secondary structure. It is located near the subunit interface in the base of the L7/L12 stalk, and near the tRNA binding site of the peptidyltransferase center. The protein is Large ribosomal subunit protein uL6 of Leuconostoc mesenteroides subsp. mesenteroides (strain ATCC 8293 / DSM 20343 / BCRC 11652 / CCM 1803 / JCM 6124 / NCDO 523 / NBRC 100496 / NCIMB 8023 / NCTC 12954 / NRRL B-1118 / 37Y).